A 123-amino-acid chain; its full sequence is Putative hypoxanthine phosphoribosyltransferase (123 aa).

Functionally, may play a role in purine salvage. This chain is Putative hypoxanthine phosphoribosyltransferase, found in Methanosarcina mazei (strain ATCC BAA-159 / DSM 3647 / Goe1 / Go1 / JCM 11833 / OCM 88) (Methanosarcina frisia).